Reading from the N-terminus, the 320-residue chain is Malate dehydrogenase (320 aa).

NAD(+) is bound by residues 10-15 and Asp34; that span reads GSGMIG. The substrate site is built by Arg83 and Arg89. Residues Asn96 and 119-121 each bind NAD(+); that span reads ITN. Positions 121 and 152 each coordinate substrate. The active-site Proton acceptor is His176.

It belongs to the LDH/MDH superfamily. MDH type 3 family.

The enzyme catalyses (S)-malate + NAD(+) = oxaloacetate + NADH + H(+). Its function is as follows. Catalyzes the reversible oxidation of malate to oxaloacetate. The chain is Malate dehydrogenase from Maricaulis maris (strain MCS10) (Caulobacter maris).